The chain runs to 1366 residues: DNA-directed RNA polymerase subunit beta' (1366 aa).

Basic residues predominate over residues 1-23 (MTSSKPKKSSRVRKTSKNSKKNN). The tract at residues 1–25 (MTSSKPKKSSRVRKTSKNSKKNNKI) is disordered. Residues Cys248, Cys315, Cys322, and Cys325 each contribute to the Zn(2+) site. Residues 1290–1366 (DYTVDMPQSP…LQEEGLLSDE (77 aa)) form a disordered region. Positions 1295 to 1305 (MPQSPTVSSTA) are enriched in polar residues. Positions 1354–1366 (LEGLQEEGLLSDE) are enriched in low complexity.

The protein belongs to the RNA polymerase beta' chain family. RpoC2 subfamily. In cyanobacteria the RNAP catalytic core is composed of 2 alpha, 1 beta, 1 beta', 1 gamma and 1 omega subunit. When a sigma factor is associated with the core the holoenzyme is formed, which can initiate transcription. Requires Zn(2+) as cofactor.

It carries out the reaction RNA(n) + a ribonucleoside 5'-triphosphate = RNA(n+1) + diphosphate. DNA-dependent RNA polymerase catalyzes the transcription of DNA into RNA using the four ribonucleoside triphosphates as substrates. This Prochlorococcus marinus (strain MIT 9515) protein is DNA-directed RNA polymerase subunit beta'.